A 206-amino-acid polypeptide reads, in one-letter code: Ribosomal RNA large subunit methyltransferase E (206 aa).

S-adenosyl-L-methionine-binding residues include G60, W62, D80, D96, and D121. The active-site Proton acceptor is the K161.

This sequence belongs to the class I-like SAM-binding methyltransferase superfamily. RNA methyltransferase RlmE family.

The protein resides in the cytoplasm. The catalysed reaction is uridine(2552) in 23S rRNA + S-adenosyl-L-methionine = 2'-O-methyluridine(2552) in 23S rRNA + S-adenosyl-L-homocysteine + H(+). Specifically methylates the uridine in position 2552 of 23S rRNA at the 2'-O position of the ribose in the fully assembled 50S ribosomal subunit. In Stutzerimonas stutzeri (strain A1501) (Pseudomonas stutzeri), this protein is Ribosomal RNA large subunit methyltransferase E.